Reading from the N-terminus, the 909-residue chain is E3 ubiquitin-protein ligase HACE1 (909 aa).

Positions 1-21 (MERAMEQLNRLTRSLRRARTV) are N-terminal helix important for homodimerization. 7 ANK repeats span residues 23–55 (LPED…NSKF), 64–93 (VKRS…NPNY), 97–126 (SGCT…DVNI), 130–159 (EGLT…DVDV), 163–192 (MGQT…DINR), 196–226 (SGAT…YLPD), and 228–253 (NGVT…QYHP). Residues 398–433 (QDQDAASIPPFEPPGPGSYENLSTGTRESKPDALAG) form a disordered region. An HECT domain is found at 574-909 (NCAKLKQGIA…HCGSYGYTMA (336 aa)). The active-site Glycyl thioester intermediate is the Cys-876.

In terms of assembly, homodimer. The homodimer is autoinhibited and stabilized by its N-terminal helix. Interacts with RAB1 (RAB1A, RAB1B or RAB1C), RAB4 (RAB4A or RAB4B) and RAB11 (RAB11A or RAB11B); in a GTP-dependent manner. Interacts with the 26S proteasomal complex through the 20S core proteasomal subunit. Interacts with RARB. In terms of processing, autoubiquitinated. As to expression, expressed in multiple tissues including heart, brain and kidney.

The protein localises to the golgi apparatus. Its subcellular location is the golgi stack membrane. It localises to the cytoplasm. The protein resides in the endoplasmic reticulum. It catalyses the reaction S-ubiquitinyl-[E2 ubiquitin-conjugating enzyme]-L-cysteine + [acceptor protein]-L-lysine = [E2 ubiquitin-conjugating enzyme]-L-cysteine + N(6)-ubiquitinyl-[acceptor protein]-L-lysine.. Its pathway is protein modification; protein ubiquitination. Its activity is regulated as follows. Sterically autoinhibited in its dimeric state. In terms of biological role, E3 ubiquitin-protein ligase involved in Golgi membrane fusion and regulation of small GTPases. Acts as a regulator of Golgi membrane dynamics during the cell cycle: recruited to Golgi membrane by Rab proteins and regulates postmitotic Golgi membrane fusion. Acts by mediating ubiquitination during mitotic Golgi disassembly, ubiquitination serving as a signal for Golgi reassembly later, after cell division. Specifically binds GTP-bound RAC1, mediating ubiquitination and subsequent degradation of active RAC1, thereby playing a role in host defense against pathogens. May also act as a transcription regulator via its interaction with RARB. The chain is E3 ubiquitin-protein ligase HACE1 (HACE1) from Homo sapiens (Human).